The sequence spans 361 residues: MFMNKKVMIGMSGGVDSSVAAYLLKQQGYDVIGVTMKLWQDDDVVEIEGGCCSLSAVEDARRVANKIGIPFYVLNFREVFKEKVIDYFIDEYLEGKTPNPCIACNKHIKFDDFYKKARQIGCDYVATGHYAKIEKDESTGRYLLKKSVTDKKDQTYALYNLTQEQLEHTLLPIGDYEKDRVREIAKEMGMAVHNKPDSQEICFVKDNDYANYVKKHSKKRIEEGFFVDTKGNILGKHKGILYYTIGQRKGLGITFGKPMFVIDINPINNTIVLGDNEDLFKKELIAKDVNFISIDTLEEPLRVQAKIRYSAKPSPATIHRVGEDTIKIVFDEAQRAITKGQSVVMYDGDIVVGGGIIEKSL.

Residues 10–17 (GMSGGVDS) and methionine 36 contribute to the ATP site. Cysteine 104 acts as the Nucleophile in catalysis. Cysteine 104 and cysteine 202 form a disulfide bridge. Glycine 128 contacts ATP. The interaction with tRNA stretch occupies residues 152–154 (KDQ). Catalysis depends on cysteine 202, which acts as the Cysteine persulfide intermediate. The segment at 308-309 (RY) is interaction with tRNA.

The protein belongs to the MnmA/TRMU family.

The protein resides in the cytoplasm. The catalysed reaction is S-sulfanyl-L-cysteinyl-[protein] + uridine(34) in tRNA + AH2 + ATP = 2-thiouridine(34) in tRNA + L-cysteinyl-[protein] + A + AMP + diphosphate + H(+). Catalyzes the 2-thiolation of uridine at the wobble position (U34) of tRNA, leading to the formation of s(2)U34. In Clostridioides difficile (strain 630) (Peptoclostridium difficile), this protein is tRNA-specific 2-thiouridylase MnmA.